A 270-amino-acid chain; its full sequence is Putative pyruvate, phosphate dikinase regulatory protein (270 aa).

148–155 (GVSRTSKT) is a binding site for ADP.

It belongs to the pyruvate, phosphate/water dikinase regulatory protein family. PDRP subfamily.

The enzyme catalyses N(tele)-phospho-L-histidyl/L-threonyl-[pyruvate, phosphate dikinase] + ADP = N(tele)-phospho-L-histidyl/O-phospho-L-threonyl-[pyruvate, phosphate dikinase] + AMP + H(+). It catalyses the reaction N(tele)-phospho-L-histidyl/O-phospho-L-threonyl-[pyruvate, phosphate dikinase] + phosphate + H(+) = N(tele)-phospho-L-histidyl/L-threonyl-[pyruvate, phosphate dikinase] + diphosphate. Bifunctional serine/threonine kinase and phosphorylase involved in the regulation of the pyruvate, phosphate dikinase (PPDK) by catalyzing its phosphorylation/dephosphorylation. The protein is Putative pyruvate, phosphate dikinase regulatory protein of Bacillus cereus (strain B4264).